The chain runs to 109 residues: Spermidine export protein MdtI (109 aa).

Helical transmembrane passes span 6–26 (WIHA…NVFL), 36–56 (WFGL…SQAV), 64–84 (AYAL…WVLF), and 88–108 (LNRK…MIKL).

This sequence belongs to the drug/metabolite transporter (DMT) superfamily. Small multidrug resistance (SMR) (TC 2.A.7.1) family. MdtI subfamily. Forms a complex with MdtJ.

It localises to the cell inner membrane. Catalyzes the excretion of spermidine. The polypeptide is Spermidine export protein MdtI (Enterobacter sp. (strain 638)).